The primary structure comprises 117 residues: Large ribosomal subunit protein bL19 (117 aa).

It belongs to the bacterial ribosomal protein bL19 family.

This protein is located at the 30S-50S ribosomal subunit interface and may play a role in the structure and function of the aminoacyl-tRNA binding site. This is Large ribosomal subunit protein bL19 from Vibrio vulnificus (strain CMCP6).